The following is a 782-amino-acid chain: General transcription and DNA repair factor IIH helicase/translocase subunit XPB (782 aa).

Basic and acidic residues predominate over residues 1-11 (MGKRDRADRDK). 2 disordered regions span residues 1 to 51 (MGKR…ESGT) and 218 to 241 (SAIS…PQGK). The short motif at 6 to 18 (RADRDKKKSRKRH) is the Nuclear localization signal element. Residues 21–30 (DEEDDEEDAP) show a composition bias toward acidic residues. The segment covering 218-236 (SAISKTAESSGGPSTSRVT) has biased composition (polar residues). The region spanning 327 to 488 (MFGNGRARSG…DLNFLIGPKL (162 aa)) is the Helicase ATP-binding domain. 340 to 347 (LPCGAGKS) lines the ATP pocket. The short motif at 441–444 (DEVH) is the DEVH box element. Positions 542–702 (RACQFLIKFH…LAGMEEEDLA (161 aa)) constitute a Helicase C-terminal domain. At Ser-686 the chain carries Phosphoserine. Position 751 is a phosphoserine; by CK2 (Ser-751).

Belongs to the helicase family. RAD25/XPB subfamily. As to quaternary structure, component of the 7-subunit TFIIH core complex composed of XPB/ERCC3, XPD/ERCC2, GTF2H1, GTF2H2, GTF2H3, GTF2H4 and GTF2H5, which is active in NER. The core complex associates with the 3-subunit CDK-activating kinase (CAK) module composed of CCNH/cyclin H, CDK7 and MNAT1 to form the 10-subunit holoenzyme (holo-TFIIH) active in transcription. Interacts with PUF60. Interacts with ATF7IP. Interacts with KAT2A; leading to KAT2A recruitment to promoters and acetylation of histones. Part of TBP-based Pol II pre-initiation complex (PIC), in which Pol II core assembles with general transcription factors and other specific initiation factors including GTF2E1, GTF2E2, GTF2F1, GTF2F2, TCEA1, ERCC2, ERCC3, GTF2H2, GTF2H3, GTF2H4, GTF2H5, GTF2A1, GTF2A2, GTF2B and TBP; this large multi-subunit PIC complex mediates DNA unwinding and targets Pol II core to the transcription start site where the first phosphodiester bond forms. In terms of processing, phosphorylation on Ser-751 by CK2 controls the 5'-excision activity of ERCC1-XPF endonuclease; phosphorylated protein inhibits the excision activity and thus NER. Dephosphorylation reactivates the 5'-excision step. Phosphorylation has no effect on transcription or the 3'-5' helicase activity.

It is found in the nucleus. The enzyme catalyses Couples ATP hydrolysis with the unwinding of duplex DNA by translocating in the 3'-5' direction.. The catalysed reaction is ATP + H2O = ADP + phosphate + H(+). Phosphorylation on Ser-751 by CK2 controls the 5'-excision activity of ERCC1-XPF endonuclease; phosphorylated protein inhibits the excision activity and thus NER. ATPase activity is stimulated by TFIIH subunit p52 (GTF2H4). DNA translocase activity by this subunit in TFIIH is stimulated by XPA, ERCC5/XPG and XFP plus ERCC1. Functionally, ATP-dependent 3'-5' DNA helicase/translocase; binds dsDNA rather than ssDNA, unzipping it in a translocase rather than classical helicase activity. Component of the general transcription and DNA repair factor IIH (TFIIH) core complex. When complexed to CDK-activating kinase (CAK), involved in RNA transcription by RNA polymerase II. The ATPase activity of XPB/ERCC3, but not its helicase activity, is required for DNA opening; it may wrap around the damaged DNA wedging it open, causing localized melting and twisting that allows XPD/ERCC2 helicase to anchor. The ATP-dependent helicase activity of XPB/ERCC3 may be required for promoter escape. Also involved in transcription-coupled nucleotide excision repair (NER) of damaged DNA. In NER, TFIIH acts by opening DNA around the lesion to allow the excision of the damaged oligonucleotide and its replacement by a new DNA fragment. The structure of the TFIIH transcription complex differs from the NER-TFIIH complex; large movements by XPD/ERCC2 and XPB/ERCC3 are stabilized by XPA. This Pongo abelii (Sumatran orangutan) protein is General transcription and DNA repair factor IIH helicase/translocase subunit XPB (ERCC3).